Reading from the N-terminus, the 471-residue chain is Methyltransferase OMS1, mitochondrial (471 aa).

A mitochondrion-targeting transit peptide spans 1–39 (MIVFRRFPTCLLHHIRQPASRSLLLESQRRSLSFTSYKY). Topologically, residues 40-103 (NSSHIDDDKS…AIARSEKFSK (64 aa)) are mitochondrial matrix. Residues 104–123 (GMTKYMIGAYVIFLIYGLFF) traverse the membrane as a helical segment. Topologically, residues 124–471 (TKKLFAKDKE…LEPVPPVSKS (348 aa)) are mitochondrial intermembrane. Residues 450–463 (FEKKDDMASKKELE) show a composition bias toward basic and acidic residues. Residues 450-471 (FEKKDDMASKKELEPVPPVSKS) are disordered.

The protein belongs to the methyltransferase superfamily. METL family.

Its subcellular location is the mitochondrion inner membrane. Mitochondrial methyltransferase which suppresses respiratory defects caused by OXA1 mutations when overexpressed. The sequence is that of Methyltransferase OMS1, mitochondrial (OMS1) from Saccharomyces cerevisiae (strain ATCC 204508 / S288c) (Baker's yeast).